The sequence spans 369 residues: Peptidyl-prolyl cis-trans isomerase D (369 aa).

The PPIase cyclophilin-type domain maps to 8-173; it reads YFDLSIGGKP…ADVRIDACGI (166 aa). 3 TPR repeats span residues 218-251, 269-302, and 306-339; these read VEAV…LQEY, VAVH…AADD, and AKAL…QPGD.

Belongs to the cyclophilin-type PPIase family. PPIase D subfamily.

The protein localises to the cytoplasm. The catalysed reaction is [protein]-peptidylproline (omega=180) = [protein]-peptidylproline (omega=0). In terms of biological role, PPIases accelerate the folding of proteins. It catalyzes the cis-trans isomerization of proline imidic peptide bonds in oligopeptides. This Eremothecium gossypii (strain ATCC 10895 / CBS 109.51 / FGSC 9923 / NRRL Y-1056) (Yeast) protein is Peptidyl-prolyl cis-trans isomerase D (CPR6).